The primary structure comprises 191 residues: UPF0149 protein plu3602 (191 aa).

The protein belongs to the UPF0149 family.

The sequence is that of UPF0149 protein plu3602 from Photorhabdus laumondii subsp. laumondii (strain DSM 15139 / CIP 105565 / TT01) (Photorhabdus luminescens subsp. laumondii).